The primary structure comprises 115 residues: MDIIKTLEDEQLRENKFDFHVGDTVKVDYLIKEGNKERVQVYEGTVIKMQGTGLRRTFTVRRLAYGVGVERTFLINSPRVTNVRLVREGKVRRSKLFYLRHREGKAAKVKEKQKF.

The protein belongs to the bacterial ribosomal protein bL19 family.

This protein is located at the 30S-50S ribosomal subunit interface and may play a role in the structure and function of the aminoacyl-tRNA binding site. The chain is Large ribosomal subunit protein bL19 from Finegoldia magna (strain ATCC 29328 / DSM 20472 / WAL 2508) (Peptostreptococcus magnus).